Here is a 204-residue protein sequence, read N- to C-terminus: MADPRVEELPDEEVPKANVEDAGSDSESEAGEESSIPAGAAVTIHSRNEKKARKAIGKLGLKHVPGITRVTLRRPKNILFVINQPDVYRSPSSNTWIIFGEAKIEDLNSQAQASAAQQLAAAEAAAGEHAGHDHDHDHGKGKAPETEAKKEEEEDDGEEVDETGLEAKDIELVMAQANVSRKKAVKALRENDNDIVNSIMALSI.

Residues 1-19 show a composition bias toward basic and acidic residues; sequence MADPRVEELPDEEVPKANV. 2 disordered regions span residues 1-47 and 118-167; these read MADP…IHSR and QLAA…GLEA. Acidic residues predominate over residues 22-32; sequence AGSDSESEAGE. Positions 46 to 111 constitute an NAC-A/B domain; the sequence is SRNEKKARKA…AKIEDLNSQA (66 aa). Residues 118-128 are compositionally biased toward low complexity; that stretch reads QLAAAEAAAGE. The segment covering 129 to 151 has biased composition (basic and acidic residues); sequence HAGHDHDHDHGKGKAPETEAKKE. The span at 152–164 shows a compositional bias: acidic residues; it reads EEEDDGEEVDETG. The region spanning 165–204 is the UBA domain; that stretch reads LEAKDIELVMAQANVSRKKAVKALRENDNDIVNSIMALSI.

This sequence belongs to the NAC-alpha family. Part of the nascent polypeptide-associated complex (NAC), consisting of egd2 and egd1. NAC associates with ribosomes via egd1.

It localises to the cytoplasm. It is found in the nucleus. Component of the nascent polypeptide-associated complex (NAC), a dynamic component of the ribosomal exit tunnel, protecting the emerging polypeptides from interaction with other cytoplasmic proteins to ensure appropriate nascent protein targeting. The NAC complex also promotes mitochondrial protein import by enhancing productive ribosome interactions with the outer mitochondrial membrane and blocks the inappropriate interaction of ribosomes translating non-secretory nascent polypeptides with translocation sites in the membrane of the endoplasmic reticulum. Egd2 may also be involved in transcription regulation. This Aspergillus fumigatus (strain ATCC MYA-4609 / CBS 101355 / FGSC A1100 / Af293) (Neosartorya fumigata) protein is Nascent polypeptide-associated complex subunit alpha (egd2).